Reading from the N-terminus, the 280-residue chain is Borealin (280 aa).

The required for interaction with INCENP stretch occupies residues 1 to 58; sequence MAPRKGSSRVAKTNSLRRRKLASFLKDFDREVEIRIKQIESDRQNLLKEVDNLYNIEI. The tract at residues 1-88 is required for centromere localization; the sequence is MAPRKGSSRV…NKQALEEAAT (88 aa). The segment at 1-140 is required for interaction with SENP3; that stretch reads MAPRKGSSRV…ENERKNLQTA (140 aa). A required to form a minimal CPC core complex that localizes to the central spindle and midbody and properly executes the role of the CPC during cytokinesis region spans residues 10 to 109; sequence VAKTNSLRRR…TAEAIQTPLK (100 aa). Residues 20–78 form a required for interaction with INCENP and BIRC5 region; sequence KLASFLKDFDREVEIRIKQIESDRQNLLKEVDNLYNIEILRLPKALREMNWLDYFALGG. Phosphothreonine; by TTK occurs at positions 88 and 94. The residue at position 106 (Thr106) is a Phosphothreonine. Ser110 is modified (phosphoserine). The tract at residues 130-169 is disordered; it reads EENERKNLQTARVKRCPPSKKRTQSIQGKGKGKRSSRANT. Lys135 participates in a covalent cross-link: Glycyl lysine isopeptide (Lys-Gly) (interchain with G-Cter in SUMO2). The segment covering 141–152 has biased composition (basic residues); it reads RVKRCPPSKKRT. Ser165 bears the Phosphoserine; by AURKB mark. Thr169 is subject to Phosphothreonine; by TTK. Phosphothreonine occurs at positions 189 and 204. Ser219 and Ser224 each carry phosphoserine. A Phosphothreonine; by TTK modification is found at Thr230. Phosphoserine occurs at positions 238 and 244.

Belongs to the borealin family. In terms of assembly, may form homooligomers and homodimers. Component of the chromosomal passenger complex (CPC) composed of at least BIRC5/survivin, CDCA8/borealin, INCENP, AURKB or AURKC; in the complex forms a triple-helix bundle-based subcomplex with INCENP and BIRC5. Interacts with SENP3, UBE2I and RANBP2. Interacts (phosphorylated) with SGO1 and SGO2; the association is dependent on CDK1. Phosphorylated by TTK, essentially at Thr-88, Thr94, Thr-169 and Thr-230. Phosphorylation (probably by CDK1) promotes targeting of the CPC to centromeric DNA. Post-translationally, sumoylated by UBE2I and RANBP2. Desumoylated by SENP3 through the removal of SUMO2 and SUMO3.

The protein localises to the nucleus. It localises to the nucleolus. The protein resides in the cytoplasm. Its subcellular location is the chromosome. It is found in the centromere. The protein localises to the cytoskeleton. It localises to the spindle. In terms of biological role, component of the chromosomal passenger complex (CPC), a complex that acts as a key regulator of mitosis. The CPC complex has essential functions at the centromere in ensuring correct chromosome alignment and segregation and is required for chromatin-induced microtubule stabilization and spindle assembly. In the complex, it may be required to direct the CPC to centromeric DNA. The chain is Borealin (CDCA8) from Pongo abelii (Sumatran orangutan).